The chain runs to 360 residues: Phosphoserine aminotransferase (360 aa).

R42 contributes to the L-glutamate binding site. Pyridoxal 5'-phosphate-binding positions include 76–77 (AS), W102, T152, D172, and Q195. At K196 the chain carries N6-(pyridoxal phosphate)lysine. Residue 237 to 238 (NT) coordinates pyridoxal 5'-phosphate.

The protein belongs to the class-V pyridoxal-phosphate-dependent aminotransferase family. SerC subfamily. As to quaternary structure, homodimer. Pyridoxal 5'-phosphate serves as cofactor.

The protein localises to the cytoplasm. It carries out the reaction O-phospho-L-serine + 2-oxoglutarate = 3-phosphooxypyruvate + L-glutamate. The enzyme catalyses 4-(phosphooxy)-L-threonine + 2-oxoglutarate = (R)-3-hydroxy-2-oxo-4-phosphooxybutanoate + L-glutamate. Its pathway is amino-acid biosynthesis; L-serine biosynthesis; L-serine from 3-phospho-D-glycerate: step 2/3. Catalyzes the reversible conversion of 3-phosphohydroxypyruvate to phosphoserine and of 3-hydroxy-2-oxo-4-phosphonooxybutanoate to phosphohydroxythreonine. The sequence is that of Phosphoserine aminotransferase from Bacillus thuringiensis subsp. konkukian (strain 97-27).